Reading from the N-terminus, the 406-residue chain is Olfactomedin-like protein 3 (406 aa).

Positions 1 to 21 (MGPSAPLLLFFLLSWPGSLQG) are cleaved as a signal peptide. A coiled-coil region spans residues 22-101 (QQHHLVEYME…REVDYLETQN (80 aa)). The Olfactomedin-like domain occupies 134-401 (DCSYTISQVR…QIVYKLEMKK (268 aa)). A disulfide bond links C135 and C328. N248 is a glycosylation site (N-linked (GlcNAc...) asparagine).

The protein belongs to the OLFML3 family.

It is found in the secreted. Secreted scaffold protein that plays an essential role in dorsoventral patterning during early development. Stabilizes axial formation by restricting chordin (CHRD) activity on the dorsal side. Acts by facilitating the association between the tolloid proteases and their substrate chordin (CHRD), leading to enhance chordin (CHRD) degradation. May have matrix-related function involved in placental and embryonic development, or play a similar role in other physiological processes. In Rattus norvegicus (Rat), this protein is Olfactomedin-like protein 3 (Olfml3).